A 609-amino-acid chain; its full sequence is UvrABC system protein C (609 aa).

The GIY-YIG domain maps to 16-94 (SSPGVYRMYD…IKQYMPKYNV (79 aa)). Positions 203-238 (QQVMSVLVQKMEQASSDMRYEQAALYRDQITALRRV) constitute a UVR domain.

It belongs to the UvrC family. As to quaternary structure, interacts with UvrB in an incision complex.

Its subcellular location is the cytoplasm. Functionally, the UvrABC repair system catalyzes the recognition and processing of DNA lesions. UvrC both incises the 5' and 3' sides of the lesion. The N-terminal half is responsible for the 3' incision and the C-terminal half is responsible for the 5' incision. The protein is UvrABC system protein C of Shewanella pealeana (strain ATCC 700345 / ANG-SQ1).